A 294-amino-acid polypeptide reads, in one-letter code: MIPSELEPEFLHIPVLSQAVIQGLNLRPGGHYLDATVGGGGHSRLILEAAPESQVTALDRDQQALQAARSALQPYGERVQFYQSNFADYESGSLRFDGILADLGVSSAQLDQPQRGFSFRADAPLDMRMDQRQSLTAAELVNTASAEELADIFYYYGEERFARRIARRIVQHRPLYTTAQLASLVSRALPSRSQSIHPATRVFQALRIAVNRELESLEQFLERSPHWLVTGGRLAVISFHSLEDRRVKHGLRDHSLLQVLTKKPILPSSEEISANPRARSAKLRLAQRLDALEG.

Residues 40-42, Asp-59, Phe-86, Asp-102, and Gln-109 each bind S-adenosyl-L-methionine; that span reads GGH.

This sequence belongs to the methyltransferase superfamily. RsmH family.

Its subcellular location is the cytoplasm. The enzyme catalyses cytidine(1402) in 16S rRNA + S-adenosyl-L-methionine = N(4)-methylcytidine(1402) in 16S rRNA + S-adenosyl-L-homocysteine + H(+). Functionally, specifically methylates the N4 position of cytidine in position 1402 (C1402) of 16S rRNA. This is Ribosomal RNA small subunit methyltransferase H from Cyanothece sp. (strain PCC 7425 / ATCC 29141).